The primary structure comprises 474 residues: 6-phospho-beta-galactosidase (474 aa).

D-galactose 6-phosphate contacts are provided by Gln19, His116, Asn159, Glu160, and Asn297. Residue Glu160 is the Proton donor of the active site. Residue Glu375 is the Nucleophile of the active site. The D-galactose 6-phosphate site is built by Ser433, Trp434, Lys440, and Tyr442.

The protein belongs to the glycosyl hydrolase 1 family.

It carries out the reaction a 6-phospho-beta-D-galactoside + H2O = D-galactose 6-phosphate + an alcohol. The protein operates within carbohydrate metabolism; lactose degradation; D-galactose 6-phosphate and beta-D-glucose from lactose 6-phosphate: step 1/1. This is 6-phospho-beta-galactosidase from Lacticaseibacillus casei (strain BL23) (Lactobacillus casei).